A 708-amino-acid chain; its full sequence is Elongation factor G (708 aa).

The tr-type G domain occupies 9–289 (MFTRNIGIMA…AVCAFLPSPE (281 aa)). Residues 18 to 25 (AHIDAGKT), 86 to 90 (DTPGH), and 140 to 143 (NKMD) contribute to the GTP site.

Belongs to the TRAFAC class translation factor GTPase superfamily. Classic translation factor GTPase family. EF-G/EF-2 subfamily.

Its subcellular location is the cytoplasm. Catalyzes the GTP-dependent ribosomal translocation step during translation elongation. During this step, the ribosome changes from the pre-translocational (PRE) to the post-translocational (POST) state as the newly formed A-site-bound peptidyl-tRNA and P-site-bound deacylated tRNA move to the P and E sites, respectively. Catalyzes the coordinated movement of the two tRNA molecules, the mRNA and conformational changes in the ribosome. The polypeptide is Elongation factor G (Parabacteroides distasonis (strain ATCC 8503 / DSM 20701 / CIP 104284 / JCM 5825 / NCTC 11152)).